A 162-amino-acid polypeptide reads, in one-letter code: Phosphopantetheine adenylyltransferase (162 aa).

S11 lines the substrate pocket. ATP contacts are provided by residues 11 to 12 (SF) and H19. Residues K43, V76, and R90 each coordinate substrate. ATP is bound by residues 91-93 (GLR), E101, and 126-132 (HLYISSS).

It belongs to the bacterial CoaD family. In terms of assembly, homohexamer. Requires Mg(2+) as cofactor.

The protein resides in the cytoplasm. The enzyme catalyses (R)-4'-phosphopantetheine + ATP + H(+) = 3'-dephospho-CoA + diphosphate. It functions in the pathway cofactor biosynthesis; coenzyme A biosynthesis; CoA from (R)-pantothenate: step 4/5. With respect to regulation, is inhibited by a series of cycloalkyl pyrimidines, which also show suppression of bacterial growth. Reversibly transfers an adenylyl group from ATP to 4'-phosphopantetheine, yielding dephospho-CoA (dPCoA) and pyrophosphate. This Streptococcus pneumoniae (strain ATCC BAA-255 / R6) protein is Phosphopantetheine adenylyltransferase.